Consider the following 245-residue polypeptide: 1-(5-phosphoribosyl)-5-[(5-phosphoribosylamino)methylideneamino] imidazole-4-carboxamide isomerase (245 aa).

Aspartate 7 functions as the Proton acceptor in the catalytic mechanism. The Proton donor role is filled by aspartate 129.

This sequence belongs to the HisA/HisF family.

The protein resides in the cytoplasm. It carries out the reaction 1-(5-phospho-beta-D-ribosyl)-5-[(5-phospho-beta-D-ribosylamino)methylideneamino]imidazole-4-carboxamide = 5-[(5-phospho-1-deoxy-D-ribulos-1-ylimino)methylamino]-1-(5-phospho-beta-D-ribosyl)imidazole-4-carboxamide. Its pathway is amino-acid biosynthesis; L-histidine biosynthesis; L-histidine from 5-phospho-alpha-D-ribose 1-diphosphate: step 4/9. The sequence is that of 1-(5-phosphoribosyl)-5-[(5-phosphoribosylamino)methylideneamino] imidazole-4-carboxamide isomerase from Shewanella baltica (strain OS195).